The chain runs to 114 residues: Protein vCCL3 (114 aa).

The first 26 residues, 1-26 (MWSMCWVLRAHLGLLFWVAVIELCAA), serve as a signal peptide directing secretion.

Functionally, acts as a highly selective agonist for human lymphoactin receptor XCR1. The polypeptide is Protein vCCL3 (K4.1) (Human herpesvirus 8 type P (isolate GK18) (HHV-8)).